A 514-amino-acid chain; its full sequence is ATP synthase subunit alpha 2 (514 aa).

170–177 (GDRQTGKT) lines the ATP pocket.

Belongs to the ATPase alpha/beta chains family. F-type ATPases have 2 components, CF(1) - the catalytic core - and CF(0) - the membrane proton channel. CF(1) has five subunits: alpha(3), beta(3), gamma(1), delta(1), epsilon(1). CF(0) has three main subunits: a(1), b(2) and c(9-12). The alpha and beta chains form an alternating ring which encloses part of the gamma chain. CF(1) is attached to CF(0) by a central stalk formed by the gamma and epsilon chains, while a peripheral stalk is formed by the delta and b chains.

It localises to the cell inner membrane. The catalysed reaction is ATP + H2O + 4 H(+)(in) = ADP + phosphate + 5 H(+)(out). Produces ATP from ADP in the presence of a proton gradient across the membrane. The alpha chain is a regulatory subunit. The polypeptide is ATP synthase subunit alpha 2 (Hahella chejuensis (strain KCTC 2396)).